The following is a 123-amino-acid chain: Small ribosomal subunit protein uS12 (123 aa).

Asp-89 carries the 3-methylthioaspartic acid modification. Positions 102 to 123 (LDTQGVKDRKQGRSKYGAKRPK) are disordered. Residues 113-123 (GRSKYGAKRPK) show a composition bias toward basic residues.

Belongs to the universal ribosomal protein uS12 family. In terms of assembly, part of the 30S ribosomal subunit. Contacts proteins S8 and S17. May interact with IF1 in the 30S initiation complex.

Its function is as follows. With S4 and S5 plays an important role in translational accuracy. Functionally, interacts with and stabilizes bases of the 16S rRNA that are involved in tRNA selection in the A site and with the mRNA backbone. Located at the interface of the 30S and 50S subunits, it traverses the body of the 30S subunit contacting proteins on the other side and probably holding the rRNA structure together. The combined cluster of proteins S8, S12 and S17 appears to hold together the shoulder and platform of the 30S subunit. The sequence is that of Small ribosomal subunit protein uS12 from Magnetococcus marinus (strain ATCC BAA-1437 / JCM 17883 / MC-1).